The sequence spans 175 residues: Inorganic pyrophosphatase (175 aa).

Lys-30, Arg-44, and Tyr-56 together coordinate substrate. Asp-66, Asp-71, and Asp-103 together coordinate Mg(2+). Tyr-142 provides a ligand contact to substrate.

It belongs to the PPase family. In terms of assembly, homohexamer. The cofactor is Mg(2+).

It localises to the cytoplasm. It carries out the reaction diphosphate + H2O = 2 phosphate + H(+). Its function is as follows. Catalyzes the hydrolysis of inorganic pyrophosphate (PPi) forming two phosphate ions. This Haemophilus ducreyi (strain 35000HP / ATCC 700724) protein is Inorganic pyrophosphatase.